Here is a 293-residue protein sequence, read N- to C-terminus: Elongation factor Ts (293 aa).

Residues 80–83 are involved in Mg(2+) ion dislocation from EF-Tu; that stretch reads TDFV.

Belongs to the EF-Ts family.

The protein resides in the cytoplasm. In terms of biological role, associates with the EF-Tu.GDP complex and induces the exchange of GDP to GTP. It remains bound to the aminoacyl-tRNA.EF-Tu.GTP complex up to the GTP hydrolysis stage on the ribosome. The chain is Elongation factor Ts from Paraburkholderia xenovorans (strain LB400).